The primary structure comprises 162 residues: Regulator of sigma D (162 aa).

It belongs to the Rsd/AlgQ family. In terms of assembly, interacts with RpoD.

The protein resides in the cytoplasm. Functionally, binds RpoD and negatively regulates RpoD-mediated transcription activation by preventing the interaction between the primary sigma factor RpoD with the catalytic core of the RNA polymerase and with promoter DNA. May be involved in replacement of the RNA polymerase sigma subunit from RpoD to RpoS during the transition from exponential growth to the stationary phase. The protein is Regulator of sigma D of Salmonella arizonae (strain ATCC BAA-731 / CDC346-86 / RSK2980).